Here is a 347-residue protein sequence, read N- to C-terminus: Microneme protein 21 (347 aa).

The protein resides in the cytoplasmic vesicle. It localises to the secretory vesicle. Its subcellular location is the microneme. The protein localises to the secreted. The polypeptide is Microneme protein 21 (Toxoplasma gondii).